Reading from the N-terminus, the 1201-residue chain is Protein dduB (1201 aa).

The first 22 residues, 1–22, serve as a signal peptide directing secretion; it reads MKFIKYLLILFLILKINYFVES. At 23–1180 the chain is on the extracellular side; sequence GVDCQKNTEY…QDPSDELSTS (1158 aa). N-linked (GlcNAc...) asparagine glycans are attached at residues Asn-68, Asn-122, Asn-150, Asn-185, Asn-283, Asn-348, Asn-360, Asn-437, Asn-448, Asn-518, Asn-535, Asn-554, Asn-585, Asn-631, Asn-759, Asn-815, Asn-830, Asn-844, Asn-946, Asn-1042, Asn-1058, Asn-1098, and Asn-1108. A helical transmembrane segment spans residues 1181–1201; the sequence is SFIQLNILSLLLISIFTIFIL.

The protein resides in the membrane. The sequence is that of Protein dduB (dduB) from Dictyostelium discoideum (Social amoeba).